Consider the following 592-residue polypeptide: Methionine--tRNA ligase (592 aa).

Residues 12 to 22 carry the 'HIGH' region motif; sequence PYANGPFHVGH. C144, C147, C157, and C160 together coordinate Zn(2+). Positions 342-346 match the 'KMSKS' region motif; the sequence is KMSTS. T345 provides a ligand contact to ATP.

Belongs to the class-I aminoacyl-tRNA synthetase family. MetG type 1 subfamily. Monomer. Requires Zn(2+) as cofactor.

Its subcellular location is the cytoplasm. It carries out the reaction tRNA(Met) + L-methionine + ATP = L-methionyl-tRNA(Met) + AMP + diphosphate. Is required not only for elongation of protein synthesis but also for the initiation of all mRNA translation through initiator tRNA(fMet) aminoacylation. The polypeptide is Methionine--tRNA ligase (Roseiflexus sp. (strain RS-1)).